A 136-amino-acid polypeptide reads, in one-letter code: Protein LpdD (136 aa).

This sequence belongs to the CinA family.

Functionally, probably involved in tannin degradation, however the precise biochemical function in metabolism of gallate is unknown. This chain is Protein LpdD, found in Lactiplantibacillus plantarum (strain ATCC BAA-793 / NCIMB 8826 / WCFS1) (Lactobacillus plantarum).